The primary structure comprises 557 residues: MAHTKIPTALHEQENFLPKKKLIIVILTLGVVLFVINIDHNGLSTLLPTIAEDLGAQKSITWAGSSQLIATTVFSVLYGRLSDIFGRKALFVSALWVFSIAELGCGFATSPKMLYAMRALTGASGGGIGNLSIIIATDVVSLRHRGQYMAVVAPFMVLGNICGPLVAAGVAKSPLTWRGLFWLISPLGVLSAVLAGYILPSTTPTDTFKQNLVKVDWLGSFTSTIAIVGFMVAVSGPGAYHAGYSLLVISLLSVSGVAFLAFLFIEWKLATLPVIPLTIFAIPDVSALLMQTFTLGWVNQANVYFVPIYAQNLRQWSPVISGVLLFPIIAVQVVVSMIAGRWMSKSGQYGLTIRLGVALLLIGSLLETKFGRETHPAYVIIVLLVIGIGVGAANQPMVIAMQAHTKKSERAVVTSSRNFFRFLGSACGVVMSAAILQSTLRTSLPAAYKHLADSPYALAGLNPRERDAIAPAYERAIRHVYIASAAASVLCSLGLFVWKDDGYESRPTENNDDIEHAPARGIEREDEQSSLIYDREPSAVSYGTVEAGEPNRLRRGG.

14 helical membrane-spanning segments follow: residues 22 to 42 (LIIV…DHNG), 59 to 79 (SITW…VLYG), 89 to 109 (ALFV…GFAT), 120 to 140 (LTGA…TDVV), 150 to 170 (AVVA…AAGV), 179 to 199 (GLFW…GYIL), 217 to 237 (WLGS…VSGP), 245 to 265 (SLLV…FLFI), 269 to 289 (LATL…SALL), 319 to 339 (VISG…SMIA), 346 to 366 (SGQY…GSLL), 379 to 399 (VIIV…PMVI), 419 to 439 (FFRF…LQST), and 479 to 499 (HVYI…FVWK). Positions 505–523 (SRPTENNDDIEHAPARGIE) are enriched in basic and acidic residues. The interval 505 to 557 (SRPTENNDDIEHAPARGIEREDEQSSLIYDREPSAVSYGTVEAGEPNRLRRGG) is disordered.

It belongs to the major facilitator superfamily. TCR/Tet family.

It is found in the membrane. Functionally, MFS-type transporter; part of the gene cluster that mediates the biosynthesis of squalestatin S1 (SQS1, also known as zaragozic acid A), a heavily oxidized fungal polyketide that offers potent cholesterol lowering activity by targeting squalene synthase (SS). This is MFS-type transporter clz4 from Cochliobolus lunatus (Filamentous fungus).